Here is a 100-residue protein sequence, read N- to C-terminus: Large ribosomal subunit protein uL23 (100 aa).

The protein belongs to the universal ribosomal protein uL23 family. In terms of assembly, part of the 50S ribosomal subunit. Contacts protein L29, and trigger factor when it is bound to the ribosome.

In terms of biological role, one of the early assembly proteins it binds 23S rRNA. One of the proteins that surrounds the polypeptide exit tunnel on the outside of the ribosome. Forms the main docking site for trigger factor binding to the ribosome. The sequence is that of Large ribosomal subunit protein uL23 from Aeromonas hydrophila subsp. hydrophila (strain ATCC 7966 / DSM 30187 / BCRC 13018 / CCUG 14551 / JCM 1027 / KCTC 2358 / NCIMB 9240 / NCTC 8049).